The following is a 515-amino-acid chain: Meiotically up-regulated gene 68 protein (515 aa).

The disordered stretch occupies residues 165-204 (LHSIESERNESSLSLDSGESEKKSEEDNGNGEQNYIPEQY).

Has a role in meiosis. The sequence is that of Meiotically up-regulated gene 68 protein (mug68) from Schizosaccharomyces pombe (strain 972 / ATCC 24843) (Fission yeast).